A 511-amino-acid polypeptide reads, in one-letter code: Frizzled/smoothened-like sans CRD protein C (511 aa).

Positions 1 to 25 (MNQINKFIKNLYLIIITIILIIVIS) are cleaved as a signal peptide. The Extracellular segment spans residues 26-93 (NDNNGLFING…QWESYFEMSL (68 aa)). Residue Asn-51 is glycosylated (N-linked (GlcNAc...) asparagine). A helical membrane pass occupies residues 94–114 (IMGSISMFASLFLIITYSPLI). Over 115 to 122 (NKKHTRHT) the chain is Cytoplasmic. The chain crosses the membrane as a helical span at residues 123–143 (VGILCMSIGIFFVMVSDGRQL). The Extracellular portion of the chain corresponds to 144–172 (WDIESPGEYKKYCPDTGRYARQSDTKCLT). The helical transmembrane segment at 173–193 (TGLFFQFGCVTAIGWWSILAV) threads the bilayer. At 194–209 (DLWMTIAKKVQTTKKQ) the chain is on the cytoplasmic side. The helical transmembrane segment at 210–230 (LLYYLIGINTVSLILTFGPVV) threads the bilayer. At 231–253 (KNQYGFGNAAIGCWMLDLKYQYG) the chain is on the extracellular side. Residues 254–274 (FFWIPVGICLSVGSVFIGLIF) form a helical membrane-spanning segment. Over 275–295 (WEIYKISDAVKKRYLKKHIKP) the chain is Cytoplasmic. A helical transmembrane segment spans residues 296–316 (LCLIVLMCLEFLYMFIYYSYI). At 317-357 (TANQPTYNKHVAEYIMCLIINAANVPGSYTCQLKTVSPTAQ) the chain is on the extracellular side. The helical transmembrane segment at 358–378 (FLFLIAIRLMGLQGLIFYGLT) threads the bilayer. Over 379–511 (AATKKVWANS…RVNSPDNLQP (133 aa)) the chain is Cytoplasmic. The disordered stretch occupies residues 430–511 (NGYTTGGSDN…RVNSPDNLQP (82 aa)). Residues 433–443 (TTGGSDNGVGS) are compositionally biased toward gly residues. A compositionally biased stretch (polar residues) spans 451 to 460 (KSSSNGGAQD). The segment covering 461–485 (NNNNNNNNNNNNNNNNNNNNNNNNN) has biased composition (low complexity). A compositionally biased stretch (polar residues) spans 486-511 (SSSLEISGVESNNSTPRVNSPDNLQP).

Belongs to the G-protein coupled receptor Fz/Smo family.

It localises to the membrane. The chain is Frizzled/smoothened-like sans CRD protein C (fscC) from Dictyostelium discoideum (Social amoeba).